The chain runs to 1901 residues: Methylcytosine dioxygenase tet3 (1901 aa).

The CXXC-type zinc finger occupies 58–99 (SNKKRKRCGVCVPCLRKEPCGACYNCVNRSTSHQICKMRKCE). Residues C65, C68, C71, C77, C80, C83, C93, and C98 each contribute to the Zn(2+) site. Disordered stretches follow at residues 434–455 (KNAL…KKSS), 602–658 (WWVP…EGSA), 751–787 (KDQC…QNDL), and 808–867 (DFSL…PVSR). 2 stretches are compositionally biased toward polar residues: residues 442–455 (SPRQ…KKSS) and 602–614 (WWVP…PVSK). Residues 640–652 (KPQRKQVQIKKPK) show a composition bias toward basic residues. Residues 758-771 (STHDTSSSSGQGDS) are compositionally biased toward low complexity. Residues 847–867 (ENSTKPATHSNPALSNNPVSR) show a composition bias toward polar residues. Residues C957, C959, C1017, H1043, and C1045 each contribute to the Zn(2+) site. Residue R1085 coordinates 2-oxoglutarate. Positions 1095, 1097, 1113, 1122, and 1182 each coordinate Zn(2+). C1198 contributes to the 2-oxoglutarate binding site. Residue H1204 coordinates Zn(2+). Fe cation contacts are provided by H1206 and D1208. H1240 serves as a coordination point for 2-oxoglutarate. 4 disordered regions span residues 1282-1338 (SEPA…QQTK), 1457-1501 (YGSE…VETT), 1591-1624 (SNAP…PGKV), and 1680-1745 (SATP…DEEI). The segment covering 1291–1325 (RQLEAKKAAAEKKKLQKEKLVSPDKTKQEPSDKKT) has biased composition (basic and acidic residues). Residues 1326–1338 (CQQNPGVPQQQTK) are compositionally biased toward polar residues. Basic and acidic residues predominate over residues 1465 to 1474 (SFRRSSEVPH). Residues 1477 to 1487 (SLQNPSSQKSV) show a composition bias toward polar residues. 2 stretches are compositionally biased toward polar residues: residues 1680-1693 (SATP…TPCS) and 1702-1719 (SFPN…SQNH). H1780 is a Fe cation binding site. 1795–1797 (RIS) is a binding site for 2-oxoglutarate.

Belongs to the TET family. Fe(2+) is required as a cofactor. Zn(2+) serves as cofactor.

The protein localises to the nucleus. Its subcellular location is the chromosome. The catalysed reaction is a 5-methyl-2'-deoxycytidine in DNA + 2-oxoglutarate + O2 = a 5-hydroxymethyl-2'-deoxycytidine in DNA + succinate + CO2. It carries out the reaction a 5-hydroxymethyl-2'-deoxycytidine in DNA + 2-oxoglutarate + O2 = a 5-formyl-2'-deoxycytidine in DNA + succinate + CO2 + H2O. It catalyses the reaction a 5-formyl-2'-deoxycytidine in DNA + 2-oxoglutarate + O2 = a 5-carboxyl-2'-deoxycytidine in DNA + succinate + CO2 + H(+). Dioxygenase that catalyzes the conversion of the modified genomic base 5-methylcytosine (5mC) into 5-hydroxymethylcytosine (5hmC) and plays a key role in epigenetic chromatin reprogramming during embryonic development. Conversion of 5mC into 5hmC probably constitutes the first step in cytosine demethylation. Selectively binds to the promoter region of target genes and contributes to regulate the expression of numerous developmental genes, including pax6, rax, sox9 and six3. May also contribute to the regulation of target genes in ways that do not require its enzyme activity. The protein is Methylcytosine dioxygenase tet3 of Xenopus tropicalis (Western clawed frog).